We begin with the raw amino-acid sequence, 88 residues long: Small ribosomal subunit protein uS17 (88 aa).

This sequence belongs to the universal ribosomal protein uS17 family. Part of the 30S ribosomal subunit.

Its function is as follows. One of the primary rRNA binding proteins, it binds specifically to the 5'-end of 16S ribosomal RNA. The chain is Small ribosomal subunit protein uS17 from Hahella chejuensis (strain KCTC 2396).